An 891-amino-acid polypeptide reads, in one-letter code: Putative alpha,alpha-trehalose-phosphate synthase [UDP-forming] 100 kDa subunit (891 aa).

Residue Thr88 is modified to Phosphothreonine. Residues 88–126 (TGGSMTPGLGAMSPIPGSGRSSPLYTQPRSRATSPSRVR) form a disordered region. The span at 106–124 (GRSSPLYTQPRSRATSPSR) shows a compositional bias: polar residues. Phosphoserine occurs at positions 108 and 109. Residues 132–613 (AAPGIGAGAL…VTGFETKLKK (482 aa)) are glycosyltransferase.

This sequence in the N-terminal section; belongs to the glycosyltransferase 20 family.

It carries out the reaction D-glucose 6-phosphate + UDP-alpha-D-glucose = alpha,alpha-trehalose 6-phosphate + UDP + H(+). This is Putative alpha,alpha-trehalose-phosphate synthase [UDP-forming] 100 kDa subunit from Schizosaccharomyces pombe (strain 972 / ATCC 24843) (Fission yeast).